Here is a 403-residue protein sequence, read N- to C-terminus: Tryptophan synthase beta chain (403 aa).

The residue at position 87 (K87) is an N6-(pyridoxal phosphate)lysine.

This sequence belongs to the TrpB family. In terms of assembly, tetramer of two alpha and two beta chains. It depends on pyridoxal 5'-phosphate as a cofactor.

It catalyses the reaction (1S,2R)-1-C-(indol-3-yl)glycerol 3-phosphate + L-serine = D-glyceraldehyde 3-phosphate + L-tryptophan + H2O. Its pathway is amino-acid biosynthesis; L-tryptophan biosynthesis; L-tryptophan from chorismate: step 5/5. Its function is as follows. The beta subunit is responsible for the synthesis of L-tryptophan from indole and L-serine. This is Tryptophan synthase beta chain from Shewanella loihica (strain ATCC BAA-1088 / PV-4).